The chain runs to 335 residues: Phosphate acyltransferase (335 aa).

The protein belongs to the PlsX family. Homodimer. Probably interacts with PlsY.

The protein localises to the cytoplasm. The catalysed reaction is a fatty acyl-[ACP] + phosphate = an acyl phosphate + holo-[ACP]. The protein operates within lipid metabolism; phospholipid metabolism. Catalyzes the reversible formation of acyl-phosphate (acyl-PO(4)) from acyl-[acyl-carrier-protein] (acyl-ACP). This enzyme utilizes acyl-ACP as fatty acyl donor, but not acyl-CoA. The polypeptide is Phosphate acyltransferase (Streptococcus uberis (strain ATCC BAA-854 / 0140J)).